A 545-amino-acid polypeptide reads, in one-letter code: ATP synthase subunit alpha (545 aa).

172–179 (GDRKTGKT) contacts ATP. The tract at residues 511–545 (FQTTDGTPVINEPEARPLGDDEVTKSQITVSRKTQ) is disordered. Over residues 523-534 (PEARPLGDDEVT) the composition is skewed to basic and acidic residues. The span at 535–545 (KSQITVSRKTQ) shows a compositional bias: polar residues.

This sequence belongs to the ATPase alpha/beta chains family. In terms of assembly, F-type ATPases have 2 components, CF(1) - the catalytic core - and CF(0) - the membrane proton channel. CF(1) has five subunits: alpha(3), beta(3), gamma(1), delta(1), epsilon(1). CF(0) has three main subunits: a(1), b(2) and c(9-12). The alpha and beta chains form an alternating ring which encloses part of the gamma chain. CF(1) is attached to CF(0) by a central stalk formed by the gamma and epsilon chains, while a peripheral stalk is formed by the delta and b chains.

Its subcellular location is the cell membrane. It carries out the reaction ATP + H2O + 4 H(+)(in) = ADP + phosphate + 5 H(+)(out). Functionally, produces ATP from ADP in the presence of a proton gradient across the membrane. The alpha chain is a regulatory subunit. This chain is ATP synthase subunit alpha, found in Corynebacterium jeikeium (strain K411).